The primary structure comprises 691 residues: Glycine--tRNA ligase beta subunit (691 aa).

Belongs to the class-II aminoacyl-tRNA synthetase family. In terms of assembly, tetramer of two alpha and two beta subunits.

The protein localises to the cytoplasm. It catalyses the reaction tRNA(Gly) + glycine + ATP = glycyl-tRNA(Gly) + AMP + diphosphate. The sequence is that of Glycine--tRNA ligase beta subunit from Buchnera aphidicola subsp. Schizaphis graminum (strain Sg).